The primary structure comprises 64 residues: Beta-defensin 1 (64 aa).

Positions 1-20 are cleaved as a signal peptide; sequence MRLHHLLLVLFFLVLSAGSG. Residues 21–26 constitute a propeptide that is removed on maturation; the sequence is FTQGIR. Cystine bridges form between Cys31/Cys60, Cys38/Cys53, and Cys43/Cys61.

The protein belongs to the beta-defensin family. As to quaternary structure, monomer. Homodimer.

It is found in the secreted. Its subcellular location is the membrane. Has bactericidal activity. May act as a ligand for C-C chemokine receptor CCR6. Positively regulates the sperm motility and bactericidal activity in a CCR6-dependent manner. Binds to CCR6 and triggers Ca2+ mobilization in the sperm which is important for its motility. This is Beta-defensin 1 (DEFB1) from Capra hircus (Goat).